Consider the following 268-residue polypeptide: Tryptophan synthase alpha chain (268 aa).

Catalysis depends on proton acceptor residues E49 and D60.

It belongs to the TrpA family. As to quaternary structure, tetramer of two alpha and two beta chains.

The catalysed reaction is (1S,2R)-1-C-(indol-3-yl)glycerol 3-phosphate + L-serine = D-glyceraldehyde 3-phosphate + L-tryptophan + H2O. It functions in the pathway amino-acid biosynthesis; L-tryptophan biosynthesis; L-tryptophan from chorismate: step 5/5. Functionally, the alpha subunit is responsible for the aldol cleavage of indoleglycerol phosphate to indole and glyceraldehyde 3-phosphate. In Salmonella typhimurium (strain LT2 / SGSC1412 / ATCC 700720), this protein is Tryptophan synthase alpha chain.